The chain runs to 419 residues: UDP-N-acetylglucosamine 1-carboxyvinyltransferase (419 aa).

22-23 (KN) is a binding site for phosphoenolpyruvate. UDP-N-acetyl-alpha-D-glucosamine is bound at residue R95. Catalysis depends on C119, which acts as the Proton donor. The residue at position 119 (C119) is a 2-(S-cysteinyl)pyruvic acid O-phosphothioketal. UDP-N-acetyl-alpha-D-glucosamine is bound by residues 164 to 167 (KVSV), D308, and I330.

This sequence belongs to the EPSP synthase family. MurA subfamily.

The protein resides in the cytoplasm. It carries out the reaction phosphoenolpyruvate + UDP-N-acetyl-alpha-D-glucosamine = UDP-N-acetyl-3-O-(1-carboxyvinyl)-alpha-D-glucosamine + phosphate. It participates in cell wall biogenesis; peptidoglycan biosynthesis. Cell wall formation. Adds enolpyruvyl to UDP-N-acetylglucosamine. The protein is UDP-N-acetylglucosamine 1-carboxyvinyltransferase of Rickettsia canadensis (strain McKiel).